The chain runs to 428 residues: Glutamate-1-semialdehyde 2,1-aminomutase (428 aa).

An N6-(pyridoxal phosphate)lysine modification is found at K267.

The protein belongs to the class-III pyridoxal-phosphate-dependent aminotransferase family. HemL subfamily. Homodimer. It depends on pyridoxal 5'-phosphate as a cofactor.

It is found in the cytoplasm. The enzyme catalyses (S)-4-amino-5-oxopentanoate = 5-aminolevulinate. It participates in porphyrin-containing compound metabolism; protoporphyrin-IX biosynthesis; 5-aminolevulinate from L-glutamyl-tRNA(Glu): step 2/2. This is Glutamate-1-semialdehyde 2,1-aminomutase from Flavobacterium psychrophilum (strain ATCC 49511 / DSM 21280 / CIP 103535 / JIP02/86).